The chain runs to 128 residues: Fluoride-specific ion channel FluC (128 aa).

Transmembrane regions (helical) follow at residues 4 to 24, 39 to 59, 71 to 91, and 99 to 119; these read LLLA…RYLI, GTLI…EFSM, FLTT…YETI, and ITLG…FVVI. Residues glycine 78 and threonine 81 each contribute to the Na(+) site.

This sequence belongs to the fluoride channel Fluc/FEX (TC 1.A.43) family.

It localises to the cell membrane. It carries out the reaction fluoride(in) = fluoride(out). Na(+) is not transported, but it plays an essential structural role and its presence is essential for fluoride channel function. In terms of biological role, fluoride-specific ion channel. Important for reducing fluoride concentration in the cell, thus reducing its toxicity. The sequence is that of Fluoride-specific ion channel FluC from Clostridium perfringens (strain ATCC 13124 / DSM 756 / JCM 1290 / NCIMB 6125 / NCTC 8237 / Type A).